Reading from the N-terminus, the 363-residue chain is S-adenosylmethionine:tRNA ribosyltransferase-isomerase (363 aa).

The protein belongs to the QueA family. Monomer.

Its subcellular location is the cytoplasm. The enzyme catalyses 7-aminomethyl-7-carbaguanosine(34) in tRNA + S-adenosyl-L-methionine = epoxyqueuosine(34) in tRNA + adenine + L-methionine + 2 H(+). The protein operates within tRNA modification; tRNA-queuosine biosynthesis. Its function is as follows. Transfers and isomerizes the ribose moiety from AdoMet to the 7-aminomethyl group of 7-deazaguanine (preQ1-tRNA) to give epoxyqueuosine (oQ-tRNA). The sequence is that of S-adenosylmethionine:tRNA ribosyltransferase-isomerase from Haemophilus influenzae (strain PittEE).